The following is a 111-amino-acid chain: Ribonuclease P protein component (111 aa).

The protein belongs to the RnpA family. In terms of assembly, consists of a catalytic RNA component (M1 or rnpB) and a protein subunit.

The enzyme catalyses Endonucleolytic cleavage of RNA, removing 5'-extranucleotides from tRNA precursor.. Functionally, RNaseP catalyzes the removal of the 5'-leader sequence from pre-tRNA to produce the mature 5'-terminus. It can also cleave other RNA substrates such as 4.5S RNA. The protein component plays an auxiliary but essential role in vivo by binding to the 5'-leader sequence and broadening the substrate specificity of the ribozyme. This Borreliella afzelii (strain PKo) (Borrelia afzelii) protein is Ribonuclease P protein component.